A 280-amino-acid polypeptide reads, in one-letter code: Pantothenate synthetase (280 aa).

An ATP-binding site is contributed by 31 to 38 (MGNLHAGH). Histidine 38 serves as the catalytic Proton donor. Residue glutamine 62 coordinates (R)-pantoate. Glutamine 62 is a binding site for beta-alanine. Position 150-153 (150-153 (GKKD)) interacts with ATP. Glutamine 156 contributes to the (R)-pantoate binding site. ATP is bound by residues valine 179 and 187 to 190 (MSSR).

Belongs to the pantothenate synthetase family. Homodimer.

The protein localises to the cytoplasm. The enzyme catalyses (R)-pantoate + beta-alanine + ATP = (R)-pantothenate + AMP + diphosphate + H(+). The protein operates within cofactor biosynthesis; (R)-pantothenate biosynthesis; (R)-pantothenate from (R)-pantoate and beta-alanine: step 1/1. In terms of biological role, catalyzes the condensation of pantoate with beta-alanine in an ATP-dependent reaction via a pantoyl-adenylate intermediate. The chain is Pantothenate synthetase from Xanthomonas euvesicatoria pv. vesicatoria (strain 85-10) (Xanthomonas campestris pv. vesicatoria).